Here is a 193-residue protein sequence, read N- to C-terminus: Peptidyl-tRNA hydrolase (193 aa).

Tyrosine 16 contributes to the tRNA binding site. The Proton acceptor role is filled by histidine 21. Phenylalanine 67, asparagine 69, and asparagine 115 together coordinate tRNA.

It belongs to the PTH family. Monomer.

It localises to the cytoplasm. It catalyses the reaction an N-acyl-L-alpha-aminoacyl-tRNA + H2O = an N-acyl-L-amino acid + a tRNA + H(+). Functionally, hydrolyzes ribosome-free peptidyl-tRNAs (with 1 or more amino acids incorporated), which drop off the ribosome during protein synthesis, or as a result of ribosome stalling. In terms of biological role, catalyzes the release of premature peptidyl moieties from peptidyl-tRNA molecules trapped in stalled 50S ribosomal subunits, and thus maintains levels of free tRNAs and 50S ribosomes. This chain is Peptidyl-tRNA hydrolase, found in Psychrobacter cryohalolentis (strain ATCC BAA-1226 / DSM 17306 / VKM B-2378 / K5).